The primary structure comprises 207 residues: Alpha-1-acid glycoprotein 1 (207 aa).

Residues 1 to 18 (MALHMILVMLSLLPLLEA) form the signal peptide. Gln19 is subject to Pyrrolidone carboxylic acid. N-linked (GlcNAc...) asparagine glycans are attached at residues Asn25, Asn34, Asn76, Asn94, and Asn104. Cys91 and Cys184 are joined by a disulfide.

This sequence belongs to the calycin superfamily. Lipocalin family. In terms of tissue distribution, expressed by the liver and secreted in plasma.

It localises to the secreted. Its function is as follows. Functions as a transport protein in the blood stream. Binds various ligands in the interior of its beta-barrel domain. Appears to function in modulating the activity of the immune system during the acute-phase reaction. The chain is Alpha-1-acid glycoprotein 1 (Orm1) from Mus caroli (Ryukyu mouse).